The primary structure comprises 258 residues: UPF0246 protein YaaA (258 aa).

This sequence belongs to the UPF0246 family.

The chain is UPF0246 protein YaaA from Shigella flexneri serotype 5b (strain 8401).